A 261-amino-acid chain; its full sequence is MLRRVLASKRASLILMGMLSFYIIVSASAPAYAMHIMEGYLPAGWAAFWWLVALPFMLLGVRSLTRITKANPELKLLLALAGAFTFVLSALKLPSVTGSCSHPTGTGLGSVLFGPLAMSVLGSLVLLFQALLLAHGGLTTLGANAFSMAIAGPFAAYWIYHLTIKLTGKQRIAIFLAATLADLLTYIITSVQLALAFPAPVGGFIASFAKFAGIFAITQIPLAISEGLLTVLVWNWLQSYSPQELQLLKLIQGESQSHESI.

The signal sequence occupies residues 1–33 (MLRRVLASKRASLILMGMLSFYIIVSASAPAYA). The next 7 helical transmembrane spans lie at 41-61 (LPAG…LLGV), 76-96 (LLLA…LPSV), 108-128 (LGSV…VLLF), 140-160 (TLGA…YWIY), 172-192 (IAIF…TSVQ), 197-217 (FPAP…IFAI), and 220-240 (IPLA…LQSY).

Belongs to the CbiM family. In terms of assembly, forms an energy-coupling factor (ECF) transporter complex composed of an ATP-binding protein (A component, CbiO), a transmembrane protein (T component, CbiQ) and 2 possible substrate-capture proteins (S components, CbiM and CbiN) of unknown stoichimetry.

It localises to the cell inner membrane. It participates in cofactor biosynthesis; adenosylcobalamin biosynthesis. In terms of biological role, part of the energy-coupling factor (ECF) transporter complex CbiMNOQ involved in cobalt import. This chain is Cobalt transport protein CbiM, found in Nostoc sp. (strain PCC 7120 / SAG 25.82 / UTEX 2576).